Here is a 107-residue protein sequence, read N- to C-terminus: Putative ATP synthase subunit f, mitochondrial (107 aa).

The protein belongs to the ATPase F chain family. As to quaternary structure, F-type ATPases have 2 components, CF(1) - the catalytic core - and CF(0) - the membrane proton channel. CF(0) seems to have nine subunits: a, b, c, d, e, f, g, F6 and 8 (or A6L).

It is found in the mitochondrion membrane. In terms of biological role, mitochondrial membrane ATP synthase (F(1)F(0) ATP synthase or Complex V) produces ATP from ADP in the presence of a proton gradient across the membrane which is generated by electron transport complexes of the respiratory chain. F-type ATPases consist of two structural domains, F(1) - containing the extramembraneous catalytic core and F(0) - containing the membrane proton channel, linked together by a central stalk and a peripheral stalk. During catalysis, ATP synthesis in the catalytic domain of F(1) is coupled via a rotary mechanism of the central stalk subunits to proton translocation. Part of the complex F(0) domain. Minor subunit located with subunit a in the membrane. The polypeptide is Putative ATP synthase subunit f, mitochondrial (Drosophila melanogaster (Fruit fly)).